We begin with the raw amino-acid sequence, 160 residues long: MREMRVGHGYDVHVLVENRRLIIGGVEIPYERGLAGHSDADVLLHAICDALLGAVGLGDIGRHFPDTDAAFAGIDSRILLRRVAQQLKERAWQVGNVDATIIAQAPKMAPHIARMTAHIADDLGVAIDRVNVKATTTERLGFAGRGEGIAAEAVCLIERG.

Positions 11 and 13 each coordinate a divalent metal cation. Residues 11–13 (DVH) and 37–38 (HS) contribute to the 4-CDP-2-C-methyl-D-erythritol 2-phosphate site. H45 is a binding site for a divalent metal cation. Residues 59–61 (DIG), 64–68 (FPDTD), 103–109 (AQAPKMA), 135–138 (TTTE), F142, and R145 each bind 4-CDP-2-C-methyl-D-erythritol 2-phosphate.

It belongs to the IspF family. Homotrimer. Requires a divalent metal cation as cofactor.

The catalysed reaction is 4-CDP-2-C-methyl-D-erythritol 2-phosphate = 2-C-methyl-D-erythritol 2,4-cyclic diphosphate + CMP. The protein operates within isoprenoid biosynthesis; isopentenyl diphosphate biosynthesis via DXP pathway; isopentenyl diphosphate from 1-deoxy-D-xylulose 5-phosphate: step 4/6. Functionally, involved in the biosynthesis of isopentenyl diphosphate (IPP) and dimethylallyl diphosphate (DMAPP), two major building blocks of isoprenoid compounds. Catalyzes the conversion of 4-diphosphocytidyl-2-C-methyl-D-erythritol 2-phosphate (CDP-ME2P) to 2-C-methyl-D-erythritol 2,4-cyclodiphosphate (ME-CPP) with a corresponding release of cytidine 5-monophosphate (CMP). The chain is 2-C-methyl-D-erythritol 2,4-cyclodiphosphate synthase from Thiobacillus denitrificans (strain ATCC 25259 / T1).